The chain runs to 449 residues: Cysteine--tRNA ligase (449 aa).

Residue C30 coordinates Zn(2+). Positions 32–42 (PTVYDRAHLGN) match the 'HIGH' region motif. Residues C210, H235, and E239 each contribute to the Zn(2+) site. A 'KMSKS' region motif is present at residues 268-272 (KMSKS). Residue K271 participates in ATP binding.

It belongs to the class-I aminoacyl-tRNA synthetase family. Monomer. Zn(2+) serves as cofactor.

Its subcellular location is the cytoplasm. It catalyses the reaction tRNA(Cys) + L-cysteine + ATP = L-cysteinyl-tRNA(Cys) + AMP + diphosphate. The polypeptide is Cysteine--tRNA ligase (Acidiphilium cryptum (strain JF-5)).